A 384-amino-acid chain; its full sequence is MAGILAWFWNERFWLPHNVTWADLKNTEEATFPQAEDLYLAFPLAFCIFMVRLIFERFIAKPCAIALNIQANGPQTAQPNAILEKVFTAITKHPDEKRLEGLSKQLDWDVRSIQRWFRQRRNQEKPSTLTRFCESMWRFSFYLYVFSYGVRFLKQTPWLWNTRHCWYNYPYQPLTADLHYYYILELSFYWSLMVSQFTDIKRKDFGIMFLHHLATIFLITFSYVNNMARVGTLVLCLHDSADALLEAAKMANYAKFQKMCDLLFVMFAVVFITTRLGIFPLWVLNTTLFESWEIVGPYPSWWVFNLLLLLLQGLNCFWSYLIVKIACKTVSKGKVSKDDRSDIESSSDDEDSEPPGKKPHSSTTTNGTSGTNGYLLTGPCSVDD.

Over 1-34 (MAGILAWFWNERFWLPHNVTWADLKNTEEATFPQ) the chain is Lumenal. A glycan (N-linked (GlcNAc...) asparagine) is linked at Asn-18. The chain crosses the membrane as a helical span at residues 35 to 55 (AEDLYLAFPLAFCIFMVRLIF). A homeobox-like region spans residues 66–127 (ALNIQANGPQ…RQRRNQEKPS (62 aa)). The 202-residue stretch at 130 to 331 (TRFCESMWRF…IVKIACKTVS (202 aa)) folds into the TLC domain. Helical transmembrane passes span 174 to 194 (LTAD…SLMV), 205 to 225 (FGIM…SYVN), 263 to 283 (LFVM…PLWV), and 303 to 323 (VFNL…YLIV). At 324-384 (KIACKTVSKG…LLTGPCSVDD (61 aa)) the chain is on the cytoplasmic side. The interval 335-384 (VSKDDRSDIESSSDDEDSEPPGKKPHSSTTTNGTSGTNGYLLTGPCSVDD) is disordered. Low complexity predominate over residues 361–373 (SSTTTNGTSGTNG).

N-glycosylated. Glycosylation on Asn-18 is not necessary for function. In terms of processing, acetylated. Deacetylation by SIRT3 increases enzyme activity and promotes mitochondrial ceramide accumulation. Post-translationally, phosphorylated at the C-terminus by CK2. Broadly expressed, with highest levels in kidney and brain (at protein level).

It is found in the endoplasmic reticulum membrane. The catalysed reaction is a sphingoid base + hexadecanoyl-CoA = an N-hexadecanoyl-sphingoid base + CoA + H(+). It catalyses the reaction sphinganine + hexadecanoyl-CoA = N-hexadecanoylsphinganine + CoA + H(+). It carries out the reaction hexadecasphinganine + hexadecanoyl-CoA = N-hexadecanoylhexadecasphinganine + CoA + H(+). The enzyme catalyses sphing-4-enine + hexadecanoyl-CoA = N-hexadecanoylsphing-4-enine + CoA + H(+). The catalysed reaction is sphinganine + tetradecanoyl-CoA = N-(tetradecanoyl)-sphinganine + CoA + H(+). It catalyses the reaction sphinganine + octadecanoyl-CoA = N-(octadecanoyl)-sphinganine + CoA + H(+). It participates in lipid metabolism; sphingolipid metabolism. In terms of biological role, ceramide synthase that catalyzes the transfer of the acyl chain from acyl-CoA to a sphingoid base, with high selectivity toward palmitoyl-CoA (hexadecanoyl-CoA; C16:0-CoA). Can use other acyl donors, but with less efficiency. N-acylates sphinganine and sphingosine bases to form dihydroceramides and ceramides in de novo synthesis and salvage pathways, respectively. Ceramides generated by CERS6 play a role in inflammatory response. Acts as a regulator of metabolism and hepatic lipid accumulation. Under high fat diet, palmitoyl- (C16:0-) ceramides generated by CERS6 specifically bind the mitochondrial fission factor MFF, thereby promoting mitochondrial fragmentation and contributing to the development of obesity. In Mus musculus (Mouse), this protein is Ceramide synthase 6.